A 194-amino-acid chain; its full sequence is Histone H1.0 (194 aa).

Residue Met-1 is modified to N-acetylmethionine. The segment covering 1–11 (MTENSTSTPAA) has biased composition (low complexity). The interval 1 to 29 (MTENSTSTPAAKPKRAKASKKSTDHPKYS) is disordered. Position 2 is an N-acetylthreonine; in Histone H1.0, N-terminally processed (Thr-2). The H15 domain maps to 24 to 97 (DHPKYSDMIV…GASGSFRLAK (74 aa)). Residue Arg-42 is modified to Citrulline. The segment at 83 to 194 (QTKGVGASGS…SSAKRTGKKK (112 aa)) is disordered. Residue Ser-104 is modified to ADP-ribosylserine. The segment covering 105–194 (VAFKKTKKEV…SSAKRTGKKK (90 aa)) has biased composition (basic residues).

Belongs to the histone H1/H5 family. Post-translationally, ADP-ribosylated on Ser-104 in response to DNA damage.

The protein resides in the nucleus. The protein localises to the chromosome. Histones H1 are necessary for the condensation of nucleosome chains into higher-order structures. The histones H1.0 are found in cells that are in terminal stages of differentiation or that have low rates of cell division. This is Histone H1.0 (H1-0) from Bos taurus (Bovine).